The following is a 592-amino-acid chain: Calnexin (592 aa).

The N-terminal stretch at 1 to 20 is a signal peptide; it reads MEGKWLLCMLLVLGTAIVEA. The Lumenal segment spans residues 21–481; sequence HDGHDDDVID…QMIEAAEERP (461 aa). Ca(2+)-binding residues include S74 and D117. At K137 the chain carries N6-acetyllysine. An intrachain disulfide couples C160 to C194. Residues Y164, K166, Y185, and D192 each coordinate an alpha-D-glucoside. A disordered region spans residues 260 to 345; it reads GNLLNDMTPP…AEKPEDWDED (86 aa). Basic and acidic residues predominate over residues 274-319; that stretch reads REIEDPEDRKPEDWDERPKIPDPEAVKPDDWDEDAPAKIPDEEATK. The segment at 276-409 is p domain (Extended arm); it reads IEDPEDRKPE…RKIPNPDFFE (134 aa). 5 consecutive repeat copies span residues 278–290, 295–307, 314–326, 333–345, and 348–358. 4 X approximate repeats regions lie at residues 278–345 and 348–405; these read DPED…WDED and GEWE…IPNP. Residues 323-345 show a composition bias toward acidic residues; the sequence is WLDDEPEYVPDPDAEKPEDWDED. The segment at 326-359 is interaction with PPIB; sequence DEPEYVPDPDAEKPEDWDEDMDGEWEAPQIANPR. A disulfide bridge connects residues C360 and C366. 3 tandem repeats follow at residues 367–377, 381–391, and 395–405. E425 lines the an alpha-D-glucoside pocket. A Ca(2+)-binding site is contributed by D436. Residues 482–502 traverse the membrane as a helical segment; that stretch reads WLWVVYILTVALPVFLVILFC. 2 S-palmitoyl cysteine lipidation sites follow: C502 and C503. Topologically, residues 503 to 592 are cytoplasmic; sequence CSGKKQTSGM…SPRNRKPRRE (90 aa). Residues 503–592 are sufficient to mediate interaction with SGIP1; that stretch reads CSGKKQTSGM…SPRNRKPRRE (90 aa). The tract at residues 511 to 592 is disordered; the sequence is GMEYKKTDAP…SPRNRKPRRE (82 aa). The segment covering 525 to 547 has biased composition (acidic residues); that stretch reads KEEEEEKEEEKDKGDEEEEGEEK. Residue S554 is modified to Phosphoserine. T562 is modified (phosphothreonine). Residue S564 is modified to Phosphoserine; by MAPK3. Phosphoserine is present on S583.

Belongs to the calreticulin family. In terms of assembly, interacts with MAPK3/ERK1. Interacts with KCNH2. Associates with ribosomes. Interacts with SGIP1; involved in negative regulation of endocytosis. The palmitoylated form interacts with the ribosome-translocon complex component SSR1, promoting efficient folding of glycoproteins. Interacts with SERPINA2P/SERPINA2 and with the S and Z variants of SERPINA1. Interacts with PPIB. Interacts with ZNRF4. Interacts with SMIM22. Interacts with TMX2. Interacts with TMEM35A/NACHO. Interacts with CHRNA7. Interacts with reticulophagy regulators RETREG2 and RETREG3. Interacts with DNM1L; may form part of a larger protein complex at the ER-mitochondrial interface during mitochondrial fission. Interacts with ADAM7. (Microbial infection) Interacts with HBV large envelope protein, isoform L. As to quaternary structure, (Microbial infection) Interacts with HBV large envelope protein, isoform M; this association may be essential for isoform M proper secretion. Post-translationally, phosphorylated at Ser-564 by MAPK3/ERK1. Phosphorylation by MAPK3/ERK1 increases its association with ribosomes. In terms of processing, palmitoylation by DHHC6 leads to the preferential localization to the perinuclear rough ER. It mediates the association of calnexin with the ribosome-translocon complex (RTC) which is required for efficient folding of glycosylated proteins. Ubiquitinated, leading to proteasomal degradation. Probably ubiquitinated by ZNRF4.

It is found in the endoplasmic reticulum membrane. The protein localises to the mitochondrion membrane. The protein resides in the melanosome membrane. Calcium-binding protein that interacts with newly synthesized monoglucosylated glycoproteins in the endoplasmic reticulum. It may act in assisting protein assembly and/or in the retention within the ER of unassembled protein subunits. It seems to play a major role in the quality control apparatus of the ER by the retention of incorrectly folded proteins. Associated with partial T-cell antigen receptor complexes that escape the ER of immature thymocytes, it may function as a signaling complex regulating thymocyte maturation. Additionally it may play a role in receptor-mediated endocytosis at the synapse. In Homo sapiens (Human), this protein is Calnexin (CANX).